We begin with the raw amino-acid sequence, 81 residues long: Conotoxin Im016 (81 aa).

An N-terminal signal peptide occupies residues 1–21 (MSTLGMMLLILLLLVPLATFA). A propeptide spanning residues 22-31 (DDGPTMRGHR) is cleaved from the precursor.

This sequence belongs to the conotoxin N superfamily. Post-translationally, contains 5 disulfide bonds. In terms of tissue distribution, expressed by the venom duct.

It localises to the secreted. Its function is as follows. Probable neurotoxin. This Conus imperialis (Imperial cone) protein is Conotoxin Im016.